The chain runs to 228 residues: Ribonuclease HII (228 aa).

Positions 11 to 202 (GPVAGVDEAG…VVAAAQLHGM (192 aa)) constitute an RNase H type-2 domain. Asp-17, Glu-18, and Asp-111 together coordinate a divalent metal cation.

The protein belongs to the RNase HII family. The cofactor is Mn(2+). Mg(2+) serves as cofactor.

The protein localises to the cytoplasm. It carries out the reaction Endonucleolytic cleavage to 5'-phosphomonoester.. Endonuclease that specifically degrades the RNA of RNA-DNA hybrids. This Saccharopolyspora erythraea (strain ATCC 11635 / DSM 40517 / JCM 4748 / NBRC 13426 / NCIMB 8594 / NRRL 2338) protein is Ribonuclease HII.